Reading from the N-terminus, the 444-residue chain is Protein giant-lens (444 aa).

The N-terminal stretch at 1–24 (MPTTLMLLPCMLLLLLTAAAVAVG) is a signal peptide. Two-fingered domain 1 part repeat units follow at residues 123 to 165 (RDVR…CRCP) and 285 to 307 (CPSS…YKMC). Disulfide bonds link Cys141–Cys162, Cys147–Cys285, Cys164–Cys307, Cys316–Cys341, Cys343–Cys370, Cys378–Cys405, Cys384–Cys413, and Cys407–Cys440. Two-fingered domain repeat units follow at residues 316–370 (CTHF…LFAC) and 378–444 (CQRK…MAND). N-linked (GlcNAc...) asparagine glycosylation occurs at Asn333.

In terms of assembly, interacts with spi. In terms of tissue distribution, during embryogenesis, expression is in a segmental pattern in the ectoderm and in the nervous system. In the eye imaginal disks, expression in photoreceptor cells begins a few rows posterior to the morphogenetic furrow. Also expressed in the wing disk. In the adult, expression is seen in the retina and lamina.

The protein resides in the secreted. Regulates cell determination; development of ommatidia and optic lobe. Is a signaling molecule involved in the process of axon pathfinding in the eye. Part of the Ras pathway regulating programmed cell death in pupal eyes; activated by lozenge (lz). Antagonist for the Egfr receptor (gurken). Inhibits Egfr signaling without interacting directly with the receptor, but instead by sequestering the Egfr-activating ligand spitz (spi). This Drosophila melanogaster (Fruit fly) protein is Protein giant-lens (aos).